Here is a 142-residue protein sequence, read N- to C-terminus: Large ribosomal subunit protein uL11 (142 aa).

It belongs to the universal ribosomal protein uL11 family. In terms of assembly, part of the ribosomal stalk of the 50S ribosomal subunit. Interacts with L10 and the large rRNA to form the base of the stalk. L10 forms an elongated spine to which L12 dimers bind in a sequential fashion forming a multimeric L10(L12)X complex. Post-translationally, one or more lysine residues are methylated.

Functionally, forms part of the ribosomal stalk which helps the ribosome interact with GTP-bound translation factors. This Actinobacillus succinogenes (strain ATCC 55618 / DSM 22257 / CCUG 43843 / 130Z) protein is Large ribosomal subunit protein uL11.